Here is a 315-residue protein sequence, read N- to C-terminus: Olfactory receptor 2V1 (315 aa).

Over 1–31 (MGRWVNQSYTDGFFLLGIFSHSQTDLVLFSA) the chain is Extracellular. Residue Asn-6 is glycosylated (N-linked (GlcNAc...) asparagine). Residues 32 to 52 (VMVVFTVALCGNVLLIFLIYL) traverse the membrane as a helical segment. Over 53–58 (DAGLHT) the chain is Cytoplasmic. A helical membrane pass occupies residues 59-79 (PMYFFLSQLSLMDLMLVCNIV). Over 80 to 99 (PKMAANFLSGRKSISFVGCG) the chain is Extracellular. Cys-98 and Cys-180 are disulfide-bonded. Residues 100 to 120 (IQIGFFVSLVGSEGLLLGLMA) traverse the membrane as a helical segment. The Cytoplasmic portion of the chain corresponds to 121–149 (YDRYVAVSHPLHYPILMNQRVCLQITGSS). Residues 150-170 (WAFGIIDGVIQMVAAMGLPYC) traverse the membrane as a helical segment. Over 171 to 198 (GSRSVDHFFCEVQALLKLACADTSLFDT) the chain is Extracellular. Residues 199-219 (LLFACCVFMLLLPFSIIMASY) form a helical membrane-spanning segment. Topologically, residues 220–238 (ACILGAVLRIRSAQAWKKA) are cytoplasmic. A helical membrane pass occupies residues 239 to 259 (LATCSSHLTAVTLFYGAAMFM). At 260 to 272 (YLRPRRYRAPSHD) the chain is on the extracellular side. The helical transmembrane segment at 273–293 (KVASIFYTVLTPMLNPLIYSL) threads the bilayer. Topologically, residues 294-315 (RNGEVMGALRKGLDRCRIGSQH) are cytoplasmic.

This sequence belongs to the G-protein coupled receptor 1 family.

It localises to the cell membrane. Its function is as follows. Odorant receptor. The sequence is that of Olfactory receptor 2V1 (OR2V1) from Homo sapiens (Human).